Here is a 332-residue protein sequence, read N- to C-terminus: Melanocortin receptor 4 (332 aa).

Over Met-1–Gln-43 the chain is Extracellular. N-linked (GlcNAc...) asparagine glycosylation is found at Asn-2, Asn-17, and Asn-26. 2 disulfides stabilise this stretch: Cys-40–Cys-279 and Cys-271–Cys-277. Residues Leu-44–Ile-69 traverse the membrane as a helical segment. The Cytoplasmic segment spans residues Ala-70 to Phe-81. The chain crosses the membrane as a helical span at residues Phe-82–Leu-106. Ca(2+)-binding residues include Glu-100, Asp-122, and Asp-126. Over Leu-107–Asn-123 the chain is Extracellular. The helical transmembrane segment at Val-124 to Val-145 threads the bilayer. Residues Asp-146–Arg-165 are Cytoplasmic-facing. Residues Val-166–Ile-186 traverse the membrane as a helical segment. Residues Tyr-187–Ser-191 lie on the Extracellular side of the membrane. Residues Ala-192–Met-215 form a helical membrane-spanning segment. Topologically, residues Phe-216–Thr-248 are cytoplasmic. The chain crosses the membrane as a helical span at residues Ile-249–Cys-271. The Extracellular portion of the chain corresponds to Pro-272–Phe-280. Residues Met-281–Leu-304 form a helical membrane-spanning segment. Residues Arg-305–Tyr-332 are Cytoplasmic-facing. Cys-318 carries the S-palmitoyl cysteine lipid modification.

Belongs to the G-protein coupled receptor 1 family. As to quaternary structure, homodimer; disulfide-linked, also forms higher order oligomers. Interacts with GNAS. Interacts with ATRNL1. Interacts with MGRN1; this interaction competes with GNAS-binding and thus inhibits agonist-induced cAMP production. Interacts with MRAP and MRAP2; these associated factors increase ligand-sensitivity and generation of cAMP.

The protein localises to the cell membrane. In terms of biological role, hormone receptor that acts as a key component of the leptin-melanocortin pathway at the intersection of homeostatic maintenance of energetic state. Plays a role in regulating food intake: activation by a stimulating hormone such as anorexigenic alpha-melanocyte stimulating hormone (alpha-MSH) inhibits appetite, whereas binding to a natural antagonist like Agouti-related protein/AGRP promotes appetite. G-protein-coupled receptor that activates conventional Galphas signaling leading to induction of anorexogenic signaling in the hypothalamus to result in negative energy balance. Regulates the firing activity of neurons from the hypothalamus by alpha-MSH and AGRP independently of Galphas signaling by ligand-induced coupling of closure of inwardly rectifying potassium channel KCNJ13. In intestinal epithelial cells, plays a role in the inhibition of hepatic glucose production via nesfatin-1/NUCB2 leading to increased cyclic adenosine monophosphate (cAMP) levels and glucagon-like peptide 1 (GLP-1) secretion in the intestinal epithelium. This Sus scrofa (Pig) protein is Melanocortin receptor 4 (MC4R).